A 1585-amino-acid polypeptide reads, in one-letter code: Histone acetyltransferase lsy-12 (1585 aa).

Disordered stretches follow at residues 1–37 (MGKK…ARRE) and 279–491 (GPQH…DDPV). The span at 23–37 (PKDRTARPTAAARRE) shows a compositional bias: basic and acidic residues. The segment covering 279 to 296 (GPQHENVTVSENVLSTES) has biased composition (polar residues). Residues 302-312 (TETKRLHDSSR) show a composition bias toward basic and acidic residues. Polar residues-rich tracts occupy residues 355–364 (LLSNPHSTPV) and 411–426 (SRLS…SNDL). Positions 431–440 (SAPSSSSAAS) are enriched in low complexity. Basic residues predominate over residues 453-469 (QQRRKGNQSAARSRKIK). A compositionally biased stretch (acidic residues) spans 477 to 491 (QEDEPMELDSDDDPV). One can recognise an MYST-type HAT domain in the interval 544 to 830 (EQARLPERIH…YDPECLDWVP (287 aa)). Residues 577–602 (LFICEFCFFYARSDEIMQNHAKKCML) form a C2HC MYST-type zinc finger. Lys644 carries the post-translational modification N6-acetyllysine; by autocatalysis. Residue 685 to 689 (SCIMT) coordinates acetyl-CoA. Glu720 functions as the Proton donor/acceptor in the catalytic mechanism. Positions 724 and 815 each coordinate acetyl-CoA. 2 stretches are compositionally biased toward basic and acidic residues: residues 844 to 855 (SKEEIEQDEQRR) and 947 to 956 (VLDKSNIREE). Disordered regions lie at residues 844–903 (SKEE…LKHE), 927–1262 (EENK…IGKS), 1286–1373 (ESTA…ASNH), and 1431–1507 (HHQF…VHPQ). Over residues 977 to 999 (NKCNNTESEPNPSGRKTSATSSG) the composition is skewed to polar residues. Positions 1011 to 1022 (TEEEEEDDDPTD) are enriched in acidic residues. Over residues 1029 to 1046 (DDEKPFETSVNKEKNEKS) the composition is skewed to basic and acidic residues. Basic residues predominate over residues 1047–1060 (RRGKKVSKKRRSVA). Basic and acidic residues-rich tracts occupy residues 1070 to 1081 (VRDRDEPKKAEN) and 1135 to 1151 (DIPK…AYDR). Low complexity predominate over residues 1164 to 1173 (PTPDSYHSSP). Positions 1185–1194 (LMQAQQNIYQ) are enriched in polar residues. Positions 1196-1207 (NDCHFAENDSKP) are enriched in basic and acidic residues. Polar residues-rich tracts occupy residues 1298–1317 (AGPS…NTTP) and 1324–1333 (HPNSQQQATP). Positions 1482–1493 (QHQQQQPQQPQQ) are enriched in low complexity.

The protein belongs to the MYST (SAS/MOZ) family.

It carries out the reaction L-lysyl-[protein] + acetyl-CoA = N(6)-acetyl-L-lysyl-[protein] + CoA + H(+). Its function is as follows. Probable histone acetyltransferase. Required to initiate and then maintain lateralized gene expression in the ASE sensory neurons. Involved in determining cell fate in the ASE neurons. This is Histone acetyltransferase lsy-12 from Caenorhabditis elegans.